Reading from the N-terminus, the 449-residue chain is MFS-type transporter 1 (449 aa).

Positions Met-1–Lys-37 are enriched in basic and acidic residues. A disordered region spans residues Met-1 to Asn-43. A run of 6 helical transmembrane segments spans residues Val-61–Phe-81, Thr-97–Gly-117, Tyr-127–Thr-147, Ile-152–Val-172, Leu-185–Phe-205, and Val-212–Ala-232. An N-linked (GlcNAc...) asparagine glycan is attached at Asn-233. Helical transmembrane passes span Leu-262 to Ile-282, Tyr-298 to Ala-318, Val-326 to Ala-346, Ala-349 to Leu-369, Phe-390 to His-410, and Ile-420 to Leu-440.

Belongs to the major facilitator superfamily. Monocarboxylate porter (TC 2.A.1.13) family.

The protein resides in the cell membrane. The enzyme catalyses erythrostominone(in) = erythrostominone(out). It catalyses the reaction deoxyerythrostominone(in) = deoxyerythrostominone(out). It carries out the reaction epierythrostominol(in) = epierythrostominol(out). The catalysed reaction is deoxyerythrostominol(in) = deoxyerythrostominol(out). Functionally, MFS-type transporter that mediates the secretion of the 4 major naphthoquinone derivatives produced, erythrostominone (NQ1), deoxyerythrostominone (NQ2), epierythrostominol (NQ4), and deoxyerythrostominol (NQ5), as well as of 3 newly identified naphthoquinone derivatives termed NQ7, NQ8 and NQ9. This Ophiocordyceps sp. (strain BCC 1869) (Entomopathogenic fungus) protein is MFS-type transporter 1.